Reading from the N-terminus, the 532-residue chain is E3 ubiquitin-protein ligase rnf8-B (532 aa).

Residues 30 to 84 (VTMGRGLGVTYQLKPTLCPLMISRTHCLFKQNARDEWTVTDNKSLNGVWRNKERL) form the FHA domain. A disordered region spans residues 127-209 (SLIRPLPGKT…VETDTVSPTQ (83 aa)). The segment covering 169-178 (VSRDGEDSAK) has biased composition (basic and acidic residues). The RING-type zinc finger occupies 377–415 (CIICSEHFIEAVTLNCAHSFCSYCIKSWRKRKEECPICR).

Belongs to the RNF8 family. As to quaternary structure, homodimer. Forms a E2-E3 ubiquitin ligase complex composed of the rnf8 homodimer and a E2 heterodimer of ube2n and ube2v2.

Its subcellular location is the nucleus. It carries out the reaction S-ubiquitinyl-[E2 ubiquitin-conjugating enzyme]-L-cysteine + [acceptor protein]-L-lysine = [E2 ubiquitin-conjugating enzyme]-L-cysteine + N(6)-ubiquitinyl-[acceptor protein]-L-lysine.. It functions in the pathway protein modification; protein ubiquitination. E3 ubiquitin-protein ligase that plays a key role in DNA damage signaling via 2 distinct roles: by mediating the 'Lys-63'-linked ubiquitination of histones H2A and H2AX and promoting the recruitment of DNA repair proteins at double-strand breaks (DSBs) sites, and by catalyzing 'Lys-48'-linked ubiquitination to remove target proteins from DNA damage sites. Following DNA DSBs, it is recruited to the sites of damage by ATM-phosphorylated mdc1 and catalyzes the 'Lys-63'-linked ubiquitination of histones H2A and H2AX, thereby promoting the formation of tp53bp1 and brca1 ionizing radiation-induced foci (IRIF). H2A ubiquitination also mediates the ATM-dependent transcriptional silencing at regions flanking DSBs in cis, a mechanism to avoid collision between transcription and repair intermediates. Also catalyzes the formation of 'Lys-48'-linked polyubiquitin chains, leading to degradation of substrate proteins. In addition to its function in damage signaling, also plays a role in higher-order chromatin structure by mediating extensive chromatin decondensation. The chain is E3 ubiquitin-protein ligase rnf8-B from Xenopus laevis (African clawed frog).